The primary structure comprises 161 residues: 2-C-methyl-D-erythritol 2,4-cyclodiphosphate synthase (161 aa).

Asp10 and His12 together coordinate a divalent metal cation. 4-CDP-2-C-methyl-D-erythritol 2-phosphate contacts are provided by residues 10-12 (DVH) and 36-37 (HS). An a divalent metal cation-binding site is contributed by His44. 4-CDP-2-C-methyl-D-erythritol 2-phosphate is bound by residues 58–60 (DIG), 63–67 (FSDTD), and Arg144.

The protein belongs to the IspF family. Homotrimer. It depends on a divalent metal cation as a cofactor.

It catalyses the reaction 4-CDP-2-C-methyl-D-erythritol 2-phosphate = 2-C-methyl-D-erythritol 2,4-cyclic diphosphate + CMP. It participates in isoprenoid biosynthesis; isopentenyl diphosphate biosynthesis via DXP pathway; isopentenyl diphosphate from 1-deoxy-D-xylulose 5-phosphate: step 4/6. Functionally, involved in the biosynthesis of isopentenyl diphosphate (IPP) and dimethylallyl diphosphate (DMAPP), two major building blocks of isoprenoid compounds. Catalyzes the conversion of 4-diphosphocytidyl-2-C-methyl-D-erythritol 2-phosphate (CDP-ME2P) to 2-C-methyl-D-erythritol 2,4-cyclodiphosphate (ME-CPP) with a corresponding release of cytidine 5-monophosphate (CMP). The sequence is that of 2-C-methyl-D-erythritol 2,4-cyclodiphosphate synthase from Burkholderia lata (strain ATCC 17760 / DSM 23089 / LMG 22485 / NCIMB 9086 / R18194 / 383).